Reading from the N-terminus, the 60-residue chain is UPF0391 membrane protein CCNA_00709 (60 aa).

2 helical membrane passes run 4-24 (WAIILAIVALIAGALGFSGLA) and 33-53 (ILFFLFLVGFVLVLLLGGTVF).

The protein belongs to the UPF0391 family.

It is found in the cell membrane. The sequence is that of UPF0391 membrane protein CCNA_00709 from Caulobacter vibrioides (strain NA1000 / CB15N) (Caulobacter crescentus).